We begin with the raw amino-acid sequence, 331 residues long: Aldo-keto reductase YhdN (331 aa).

Residues 20-21 (TW) and D52 contribute to the NADP(+) site. The active-site Proton donor is Y57. NADP(+)-binding positions include Q175, 203-208 (YGSLCR), K214, R227, 280-282 (GAR), and Q286.

The protein belongs to the aldo/keto reductase family. Aldo/keto reductase 11 subfamily. Monomer.

Functionally, aldo-keto reductase (AKR) that displays broad substrate specificity in vitro. Is able to reduce the standard AKR substrates DL-glyceraldehyde, D-erythrose, methylglyoxal, p-nitrobenzaldehyde, benzaldehyde and butyraldehyde, in the presence of NADPH. Cannot use NADH as a cosubstrate. Does not act on glucose, 2-pyridine carboxyaldehyde, fructose and xylose. The physiological function of this enzyme is not clear. May play a role in bacterial stress response and/or in detoxification of reactive aldehydes. The chain is Aldo-keto reductase YhdN (yhdN) from Bacillus subtilis (strain 168).